Consider the following 384-residue polypeptide: S-adenosylmethionine synthase (384 aa).

ATP is bound at residue His15. Asp17 contributes to the Mg(2+) binding site. Glu43 provides a ligand contact to K(+). L-methionine is bound by residues Glu56 and Gln99. Residues 99–109 form a flexible loop region; the sequence is QSSDINQGVDR. ATP contacts are provided by residues 164-166, 230-231, Asp239, 245-246, Ala262, and Lys266; these read DAK, RF, and RK. Asp239 provides a ligand contact to L-methionine. L-methionine is bound at residue Lys270.

The protein belongs to the AdoMet synthase family. In terms of assembly, homotetramer; dimer of dimers. The cofactor is Mg(2+). It depends on K(+) as a cofactor.

The protein resides in the cytoplasm. The catalysed reaction is L-methionine + ATP + H2O = S-adenosyl-L-methionine + phosphate + diphosphate. It functions in the pathway amino-acid biosynthesis; S-adenosyl-L-methionine biosynthesis; S-adenosyl-L-methionine from L-methionine: step 1/1. In terms of biological role, catalyzes the formation of S-adenosylmethionine (AdoMet) from methionine and ATP. The overall synthetic reaction is composed of two sequential steps, AdoMet formation and the subsequent tripolyphosphate hydrolysis which occurs prior to release of AdoMet from the enzyme. The chain is S-adenosylmethionine synthase from Histophilus somni (strain 129Pt) (Haemophilus somnus).